Reading from the N-terminus, the 339-residue chain is UDP-3-O-acylglucosamine N-acyltransferase (339 aa).

The Proton acceptor role is filled by His248.

This sequence belongs to the transferase hexapeptide repeat family. LpxD subfamily. Homotrimer.

It carries out the reaction a UDP-3-O-[(3R)-3-hydroxyacyl]-alpha-D-glucosamine + a (3R)-hydroxyacyl-[ACP] = a UDP-2-N,3-O-bis[(3R)-3-hydroxyacyl]-alpha-D-glucosamine + holo-[ACP] + H(+). The protein operates within bacterial outer membrane biogenesis; LPS lipid A biosynthesis. Catalyzes the N-acylation of UDP-3-O-acylglucosamine using 3-hydroxyacyl-ACP as the acyl donor. Is involved in the biosynthesis of lipid A, a phosphorylated glycolipid that anchors the lipopolysaccharide to the outer membrane of the cell. The polypeptide is UDP-3-O-acylglucosamine N-acyltransferase (Caulobacter vibrioides (strain NA1000 / CB15N) (Caulobacter crescentus)).